A 302-amino-acid chain; its full sequence is Aspartate carbamoyltransferase catalytic subunit (302 aa).

Carbamoyl phosphate is bound by residues R53 and T54. L-aspartate is bound at residue K82. R103, H131, and Q134 together coordinate carbamoyl phosphate. L-aspartate-binding residues include R164 and R223. Residues L260 and P261 each coordinate carbamoyl phosphate.

The protein belongs to the aspartate/ornithine carbamoyltransferase superfamily. ATCase family. Heterooligomer of catalytic and regulatory chains.

It carries out the reaction carbamoyl phosphate + L-aspartate = N-carbamoyl-L-aspartate + phosphate + H(+). Its pathway is pyrimidine metabolism; UMP biosynthesis via de novo pathway; (S)-dihydroorotate from bicarbonate: step 2/3. Its function is as follows. Catalyzes the condensation of carbamoyl phosphate and aspartate to form carbamoyl aspartate and inorganic phosphate, the committed step in the de novo pyrimidine nucleotide biosynthesis pathway. This Methanococcus maripaludis (strain C7 / ATCC BAA-1331) protein is Aspartate carbamoyltransferase catalytic subunit.